The following is a 1046-amino-acid chain: Phospholipase D zeta 2 (1046 aa).

One can recognise a PX domain in the interval 45–205; the sequence is PKAAIVSVSR…KEVCKFLEVS (161 aa). Residues 215–343 form the PH domain; sequence SKMKEGYVTV…WVKAVDEAGC (129 aa). A PLD phosphodiesterase 1 domain is found at 472-499; sequence YLWSHHEKIVIVDYQVCFIGGLDLCFGR. Catalysis depends on residues His-477, Lys-479, and Asp-484. A compositionally biased stretch (basic and acidic residues) spans 653-667; sequence GRGDLKLDSGARQDP. Residues 653 to 677 form a disordered region; the sequence is GRGDLKLDSGARQDPGETSEESDLD. The PLD phosphodiesterase 2 domain occupies 847-874; sequence SQIYVHSKLMIVDDRIAVIGSSNINDRS. Catalysis depends on residues His-852, Lys-854, and Asp-859.

The protein belongs to the phospholipase D family. PXPH-PLD subfamily. It depends on Does not require Ca(2+) or any other cation for activity. as a cofactor. As to expression, expressed in seedlings, roots, leaves, stems and flowers. Highest expression in roots. Detected only in the meristematic regions up to 4 days after germination and then at later stages in all tissues.

The enzyme catalyses a 1,2-diacyl-sn-glycero-3-phosphocholine + H2O = a 1,2-diacyl-sn-glycero-3-phosphate + choline + H(+). Its function is as follows. Hydrolyzes glycerol-phospholipids at the terminal phosphodiesteric bond to generate phosphatidic acids (PA). Phosphatidylcholine-selective. Regulates vesicle trafficking and auxin responses. Required for the normal cycling of PIN-2 containing vesicles. Contributes to the supply of inorganic phosphorus for cell metabolism and diacylglycerol moieties for galactolipid synthesis in phosphorus-starved roots. Involved in root elongation during phosphate limitation. The polypeptide is Phospholipase D zeta 2 (Arabidopsis thaliana (Mouse-ear cress)).